Reading from the N-terminus, the 501-residue chain is ATP synthase subunit alpha (501 aa).

An ATP-binding site is contributed by 169–176 (GDRQTGKT).

Belongs to the ATPase alpha/beta chains family. As to quaternary structure, F-type ATPases have 2 components, CF(1) - the catalytic core - and CF(0) - the membrane proton channel. CF(1) has five subunits: alpha(3), beta(3), gamma(1), delta(1), epsilon(1). CF(0) has three main subunits: a(1), b(2) and c(9-12). The alpha and beta chains form an alternating ring which encloses part of the gamma chain. CF(1) is attached to CF(0) by a central stalk formed by the gamma and epsilon chains, while a peripheral stalk is formed by the delta and b chains.

The protein localises to the cell membrane. The enzyme catalyses ATP + H2O + 4 H(+)(in) = ADP + phosphate + 5 H(+)(out). In terms of biological role, produces ATP from ADP in the presence of a proton gradient across the membrane. The alpha chain is a regulatory subunit. The polypeptide is ATP synthase subunit alpha (Streptococcus thermophilus (strain CNRZ 1066)).